The following is a 231-amino-acid chain: Ribose-5-phosphate isomerase A (231 aa).

Substrate contacts are provided by residues 23-26 (SGST), 80-83 (DGAD), and 93-96 (KGGG). Glutamate 102 (proton acceptor) is an active-site residue. A substrate-binding site is contributed by lysine 120.

The protein belongs to the ribose 5-phosphate isomerase family. In terms of assembly, homodimer.

The enzyme catalyses aldehydo-D-ribose 5-phosphate = D-ribulose 5-phosphate. It participates in carbohydrate degradation; pentose phosphate pathway; D-ribose 5-phosphate from D-ribulose 5-phosphate (non-oxidative stage): step 1/1. In terms of biological role, catalyzes the reversible conversion of ribose-5-phosphate to ribulose 5-phosphate. In Prochlorococcus marinus subsp. pastoris (strain CCMP1986 / NIES-2087 / MED4), this protein is Ribose-5-phosphate isomerase A.